We begin with the raw amino-acid sequence, 226 residues long: PKHD-type hydroxylase Bpet2704 (226 aa).

The Fe2OG dioxygenase domain maps to 78–178 (KIFPPLFNRY…RISAFFWMQS (101 aa)). Residues histidine 96, aspartate 98, and histidine 159 each contribute to the Fe cation site. Arginine 169 contributes to the 2-oxoglutarate binding site.

Fe(2+) serves as cofactor. L-ascorbate is required as a cofactor.

This Bordetella petrii (strain ATCC BAA-461 / DSM 12804 / CCUG 43448) protein is PKHD-type hydroxylase Bpet2704.